The following is a 123-amino-acid chain: Probable histone H2B 4 (123 aa).

Positions 1-30 are disordered; sequence MPPKPSAKGAKKAAKTVVAKPKDGKKRRHA. S110 is a glycosylation site (O-linked (GlcNAc) serine). K118 is covalently cross-linked (Glycyl lysine isopeptide (Lys-Gly) (interchain with G-Cter in ubiquitin)).

This sequence belongs to the histone H2B family. The nucleosome is a histone octamer containing two molecules each of H2A, H2B, H3 and H4 assembled in one H3-H4 heterotetramer and two H2A-H2B heterodimers. The octamer wraps approximately 147 bp of DNA. In terms of processing, monoubiquitination of Lys-118 gives a specific tag for epigenetic transcriptional activation and is also prerequisite for histone H3 'Lys-4' and 'Lys-79' methylation. GlcNAcylation at Ser-110 promotes monoubiquitination of Lys-118. It fluctuates in response to extracellular glucose, and associates with transcribed genes.

It is found in the nucleus. The protein localises to the chromosome. Functionally, core component of nucleosome. Nucleosomes wrap and compact DNA into chromatin, limiting DNA accessibility to the cellular machineries which require DNA as a template. Histones thereby play a central role in transcription regulation, DNA repair, DNA replication and chromosomal stability. DNA accessibility is regulated via a complex set of post-translational modifications of histones, also called histone code, and nucleosome remodeling. This is Probable histone H2B 4 (his-48) from Caenorhabditis elegans.